We begin with the raw amino-acid sequence, 316 residues long: DMOA farnesyltransferase nvfB (316 aa).

9 helical membrane passes run 47-67, 71-91, 115-135, 139-159, 162-182, 191-211, 234-254, 258-278, and 294-314; these read VVGVVFGAAVAPTKLPATILL, LILVLWSLFLRSAGCVWNDVI, WNAVMLTAGIFACGGSLLSFL, CAIEALIEIFFALLYPFGKRF, FPQLILVNIGWAIPMSMHSLG, PTFFMFLFIALVIVMIDVVYS, IELLSYAFFYASTGALLAAGY, LGIPFTVLSVGGHFGGFLYFL, and KLACLIASLFWVVGLFVEYYL.

Belongs to the UbiA prenyltransferase family.

The protein resides in the membrane. The catalysed reaction is 3,5-dimethylorsellinate + (2E,6E)-farnesyl diphosphate = (3R)-3-farnesyl-6-hydroxy-2,3,5-trimethyl-4-oxocyclohexa-1,5-diene-1-carboxylate + diphosphate + H(+). It participates in secondary metabolite biosynthesis; terpenoid biosynthesis. Its function is as follows. DMOA farnesyltransferase; part of the gene cluster that mediates the biosynthesis of novofumigatonin, a heavily oxygenated meroterpenoid containing a unique orthoester moiety. The first step of the pathway is the synthesis of 3,5-dimethylorsellinic acid (DMOA) by the polyketide synthase nvfA via condensation of one acetyl-CoA starter unit with 3 malonyl-CoA units and 2 methylations. DMOA is then converted to farnesyl-DMOA by the farnesyltransferase nvfB. Epoxydation by FAD-dependent monooxygenase nvfK, followed by a protonation-initiated cyclization catalyzed by the terpene cyclase nvfL leads to the production of asnavolin H. The short chain dehydrogenase nvfC then as a 3-OH dehydrogenase of asnovolin H to yield chemesin D. There are two branches to synthesize asnovolin A from chemesin D. In one branch, chemesin D undergoes Baeyer-Villiger oxidation by nvfH, methylation by nvfJ, and enoyl reduction by the nvfM D enoylreductase that reduces the double bond between C-5'and C-6', to form respectively asnovolin I, asnovolin K, and asnovolin A. In the other branch, the methylation precedes the Baeyer-Villiger oxidation and the enoyl reduction to yield asnovolin A via the asnovolin J intermediate. Asnovolin A is further converted to fumigatonoid A by the Fe(II)/2-oxoglutarate-dependent dioxygenase nvfI that catalyzes an endoperoxidation reaction. The alpha/beta hydrolase nvfD then acts as an epimerase that converts fumigatonoid A to its C-5' epimer, which then undergoes spontaneous or nvfD-catalyzed lactonization. The following step utilizes the ketoreductase nvfG to produce fumigatonoid B. The dioxygenase nvfE further converts fumigatonoid B into fumigatonoid C. Finally the Fe(II)/2-oxoglutarate-dependent dioxygenase nvfF catalyzes two rounds of oxidation to transform fumigatonoid C into the end product, novofumigatonin A. The chain is DMOA farnesyltransferase nvfB from Aspergillus novofumigatus (strain IBT 16806).